The following is a 537-amino-acid chain: Cytochrome P450 734A5 (537 aa).

Residues 13 to 33 (GAAAVAVAAAAAWVAVYAAAA) form a helical membrane-spanning segment. Position 480 (cysteine 480) interacts with heme.

The protein belongs to the cytochrome P450 family. Heme serves as cofactor. As to expression, exclusively expressed in roots.

Its subcellular location is the membrane. Functionally, cytochrome P450 probably involved in brassinosteroids (BRs) inactivation and regulation of BRs homeostasis. This chain is Cytochrome P450 734A5 (CYP734A5), found in Oryza sativa subsp. japonica (Rice).